The sequence spans 57 residues: Small ribosomal subunit protein bS21 (57 aa).

Residues 32 to 42 (VRRREHYEKPS) are compositionally biased toward basic and acidic residues. The interval 32-57 (VRRREHYEKPSQRRKRKLEASRRRRR) is disordered. Residues 43-57 (QRRKRKLEASRRRRR) are compositionally biased toward basic residues.

This sequence belongs to the bacterial ribosomal protein bS21 family.

The sequence is that of Small ribosomal subunit protein bS21 from Synechococcus elongatus (strain ATCC 33912 / PCC 7942 / FACHB-805) (Anacystis nidulans R2).